We begin with the raw amino-acid sequence, 259 residues long: Pyridoxine 5'-phosphate synthase (259 aa).

Asn-6 contributes to the 3-amino-2-oxopropyl phosphate binding site. A 1-deoxy-D-xylulose 5-phosphate-binding site is contributed by 8–9 (DH). Arg-17 serves as a coordination point for 3-amino-2-oxopropyl phosphate. His-42 acts as the Proton acceptor in catalysis. 1-deoxy-D-xylulose 5-phosphate contacts are provided by Arg-44 and His-49. The Proton acceptor role is filled by Glu-69. A 1-deoxy-D-xylulose 5-phosphate-binding site is contributed by Thr-99. His-212 functions as the Proton donor in the catalytic mechanism. Residues Gly-213 and 234–235 (GH) each bind 3-amino-2-oxopropyl phosphate.

Belongs to the PNP synthase family. As to quaternary structure, homooctamer; tetramer of dimers.

Its subcellular location is the cytoplasm. It carries out the reaction 3-amino-2-oxopropyl phosphate + 1-deoxy-D-xylulose 5-phosphate = pyridoxine 5'-phosphate + phosphate + 2 H2O + H(+). The protein operates within cofactor biosynthesis; pyridoxine 5'-phosphate biosynthesis; pyridoxine 5'-phosphate from D-erythrose 4-phosphate: step 5/5. Its function is as follows. Catalyzes the complicated ring closure reaction between the two acyclic compounds 1-deoxy-D-xylulose-5-phosphate (DXP) and 3-amino-2-oxopropyl phosphate (1-amino-acetone-3-phosphate or AAP) to form pyridoxine 5'-phosphate (PNP) and inorganic phosphate. The chain is Pyridoxine 5'-phosphate synthase from Nautilia profundicola (strain ATCC BAA-1463 / DSM 18972 / AmH).